Consider the following 304-residue polypeptide: Recombination-associated protein RdgC (304 aa).

It belongs to the RdgC family.

It localises to the cytoplasm. The protein resides in the nucleoid. Functionally, may be involved in recombination. This is Recombination-associated protein RdgC from Shewanella sp. (strain MR-4).